Consider the following 311-residue polypeptide: Aspartate carbamoyltransferase catalytic subunit (311 aa).

Carbamoyl phosphate contacts are provided by arginine 58 and threonine 59. Lysine 86 is an L-aspartate binding site. Carbamoyl phosphate-binding residues include arginine 108, histidine 136, and glutamine 139. Positions 169 and 223 each coordinate L-aspartate. 2 residues coordinate carbamoyl phosphate: glycine 264 and proline 265.

Belongs to the aspartate/ornithine carbamoyltransferase superfamily. ATCase family. Heterododecamer (2C3:3R2) of six catalytic PyrB chains organized as two trimers (C3), and six regulatory PyrI chains organized as three dimers (R2).

The catalysed reaction is carbamoyl phosphate + L-aspartate = N-carbamoyl-L-aspartate + phosphate + H(+). It functions in the pathway pyrimidine metabolism; UMP biosynthesis via de novo pathway; (S)-dihydroorotate from bicarbonate: step 2/3. Catalyzes the condensation of carbamoyl phosphate and aspartate to form carbamoyl aspartate and inorganic phosphate, the committed step in the de novo pyrimidine nucleotide biosynthesis pathway. This chain is Aspartate carbamoyltransferase catalytic subunit, found in Pelodictyon phaeoclathratiforme (strain DSM 5477 / BU-1).